We begin with the raw amino-acid sequence, 692 residues long: Formate hydrogenlyase transcriptional activator (692 aa).

A GAF domain is found at 202-344 (DIDELVSEVA…QIAERVAIAV (143 aa)). A Sigma-54 factor interaction domain is found at 381–610 (IIGRSEAMYN…LENVVERAVL (230 aa)). ATP-binding positions include 409-416 (GETGTGKE) and 472-481 (ADKSSLFLDE). Residues 663–682 (PKGAAQRLGLKRTTLLSRMK) constitute a DNA-binding region (H-T-H motif).

Required for induction of expression of the formate dehydrogenase H and hydrogenase-3 structural genes. In Salmonella typhimurium (strain LT2 / SGSC1412 / ATCC 700720), this protein is Formate hydrogenlyase transcriptional activator (fhlA).